The sequence spans 751 residues: C2 domain-containing protein At1g53590 (751 aa).

2 consecutive transmembrane segments (helical) span residues 2 to 22 (ESSL…ISSL) and 26 to 46 (HAFF…RYVM). Residues 68-262 (DSESVRWMNY…QPNMLVVDME (195 aa)) enclose the SMP-LTD domain. The C2 domain occupies 267–381 (PTSENWFFVD…RGGQRNDMWL (115 aa)). 5 residues coordinate Ca(2+): aspartate 298, aspartate 304, aspartate 352, aspartate 354, and aspartate 359. Disordered stretches follow at residues 469-519 (QIWE…GRGL) and 572-751 (SGPL…SSSK). Basic and acidic residues predominate over residues 472 to 482 (EPRKGKSRRLD). The segment covering 483 to 502 (SQIQRTPNDESLSNGSSSTD) has biased composition (polar residues). The span at 590–611 (NSGKGHMKDVAKSFLKQAEKSA) shows a compositional bias: basic and acidic residues. Over residues 612–624 (KQIKHAFSRKGSM) the composition is skewed to basic residues. A compositionally biased stretch (basic and acidic residues) spans 625-634 (KPRDGHKEIV). Residues 639–651 (SGTDSESSDDDDA) show a composition bias toward acidic residues. Basic and acidic residues-rich tracts occupy residues 664-681 (KLTR…DHVD) and 703-751 (VEAK…SSSK). Positions 701–728 (TDVEAKEEKLKEAAESETRDMDTAMNIK) form a coiled coil.

Belongs to the extended synaptotagmin family. Ca(2+) is required as a cofactor.

The protein localises to the membrane. This is C2 domain-containing protein At1g53590 (NTMC2T6.1) from Arabidopsis thaliana (Mouse-ear cress).